A 376-amino-acid chain; its full sequence is Anhydro-N-acetylmuramic acid kinase (376 aa).

Residue Gly-22–Asp-29 participates in ATP binding.

This sequence belongs to the anhydro-N-acetylmuramic acid kinase family.

The enzyme catalyses 1,6-anhydro-N-acetyl-beta-muramate + ATP + H2O = N-acetyl-D-muramate 6-phosphate + ADP + H(+). It functions in the pathway amino-sugar metabolism; 1,6-anhydro-N-acetylmuramate degradation. The protein operates within cell wall biogenesis; peptidoglycan recycling. Its function is as follows. Catalyzes the specific phosphorylation of 1,6-anhydro-N-acetylmuramic acid (anhMurNAc) with the simultaneous cleavage of the 1,6-anhydro ring, generating MurNAc-6-P. Is required for the utilization of anhMurNAc either imported from the medium or derived from its own cell wall murein, and thus plays a role in cell wall recycling. In Neisseria gonorrhoeae (strain NCCP11945), this protein is Anhydro-N-acetylmuramic acid kinase.